We begin with the raw amino-acid sequence, 670 residues long: DNA-binding transcriptional activator HyfR (670 aa).

The 143-residue stretch at 169-311 (DLDDLIADVA…HIADRIAIAV (143 aa)) folds into the GAF domain. Residues 207 to 221 (CSDLSASHCACLPRC) carry the Cys-rich segment, might bind a metal cluster motif. Residues 347–576 (IIYQSQAMED…LENVIERAVL (230 aa)) enclose the Sigma-54 factor interaction domain. Residues 375–382 (GETGTGKE) and 438–447 (ADGGTLFLDE) each bind ATP. Residues 641–660 (PRGAATRLGMKRTTLLSRMQ) constitute a DNA-binding region (H-T-H motif).

In terms of biological role, a transcriptional activator of its own operon; when overexpressed operon expression is strongly enhanced by low pH (under pH 6.0), strongly inhibited by O(2) but only weakly stimulated by fumarate. Expression in situ is very weak. The sequence is that of DNA-binding transcriptional activator HyfR from Escherichia coli (strain K12).